A 206-amino-acid chain; its full sequence is MELHTVLIMLSLLPLLEAQNPEHAINIGDPITNETLSWLSGKWFLIAVADSDPDYRQEIQKVQTIFFYLTLNKINDTMELREYHTKDDHCVYNSNLLGFQRENGTLFKYEGEVENPSHLRVLEKHGAIMLFFDLKDEKKRGLSLSARRPDIPPELREVFQKAVTHVGMDESEIIFVDWKKDRCSEQEKKHLELEKETKKDPEESQA.

The first 18 residues, Met-1 to Ala-18, serve as a signal peptide directing secretion. Asn-33, Asn-75, and Asn-103 each carry an N-linked (GlcNAc...) asparagine glycan. Cys-90 and Cys-183 are disulfide-bonded. Residues Glu-187–Ala-206 form a disordered region.

Belongs to the calycin superfamily. Lipocalin family.

The protein resides in the secreted. In terms of biological role, functions as a transport protein in the blood stream. Binds various ligands in the interior of its beta-barrel domain. Appears to function in modulating the activity of the immune system during the acute-phase reaction. The protein is Alpha-1-acid glycoprotein 3 (Orm3) of Mus musculus (Mouse).